A 434-amino-acid polypeptide reads, in one-letter code: Serine hydroxymethyltransferase (434 aa).

(6S)-5,6,7,8-tetrahydrofolate-binding positions include Leu-133 and 137–139; that span reads GHL. At Lys-242 the chain carries N6-(pyridoxal phosphate)lysine.

The protein belongs to the SHMT family. As to quaternary structure, homodimer. Pyridoxal 5'-phosphate is required as a cofactor.

Its subcellular location is the cytoplasm. The catalysed reaction is (6R)-5,10-methylene-5,6,7,8-tetrahydrofolate + glycine + H2O = (6S)-5,6,7,8-tetrahydrofolate + L-serine. It functions in the pathway one-carbon metabolism; tetrahydrofolate interconversion. The protein operates within amino-acid biosynthesis; glycine biosynthesis; glycine from L-serine: step 1/1. In terms of biological role, catalyzes the reversible interconversion of serine and glycine with tetrahydrofolate (THF) serving as the one-carbon carrier. This reaction serves as the major source of one-carbon groups required for the biosynthesis of purines, thymidylate, methionine, and other important biomolecules. Also exhibits THF-independent aldolase activity toward beta-hydroxyamino acids, producing glycine and aldehydes, via a retro-aldol mechanism. The protein is Serine hydroxymethyltransferase of Methylorubrum extorquens (strain CM4 / NCIMB 13688) (Methylobacterium extorquens).